A 579-amino-acid polypeptide reads, in one-letter code: Probable cytochrome c oxidase subunit 1-alpha (579 aa).

A disordered region spans residues methionine 1–leucine 21. A helical transmembrane segment spans residues isoleucine 44–leucine 64. Histidine 90 provides a ligand contact to Fe(II)-heme a. 6 consecutive transmembrane segments (helical) span residues isoleucine 93–leucine 113, leucine 125–leucine 145, methionine 174–isoleucine 194, valine 217–alanine 237, leucine 262–isoleucine 282, and phenylalanine 295–tryptophan 315. Histidine 268 and tyrosine 272 together coordinate Cu cation. The segment at residues histidine 268–tyrosine 272 is a cross-link (1'-histidyl-3'-tyrosine (His-Tyr)). Histidine 317 and histidine 318 together coordinate Cu cation. 5 helical membrane passes run methionine 319–valine 339, methionine 363–leucine 383, phenylalanine 397–glycine 417, isoleucine 437–glycine 457, and isoleucine 480–tryptophan 500. Heme a3 is bound at residue histidine 401. Histidine 403 contributes to the Fe(II)-heme a binding site.

This sequence belongs to the heme-copper respiratory oxidase family. Associates with subunits II, III and IV to form cytochrome c oxidase. It depends on Cu(2+) as a cofactor. The cofactor is heme.

It localises to the cell membrane. It catalyses the reaction 4 Fe(II)-[cytochrome c] + O2 + 8 H(+)(in) = 4 Fe(III)-[cytochrome c] + 2 H2O + 4 H(+)(out). Its pathway is energy metabolism; oxidative phosphorylation. In terms of biological role, cytochrome c oxidase is the component of the respiratory chain that catalyzes the reduction of oxygen to water. Subunits 1-3 form the functional core of the enzyme complex. CO I is the catalytic subunit of the enzyme. Electrons originating in cytochrome c are transferred via the copper A center of subunit 2 and heme A of subunit 1 to the bimetallic center formed by heme A3 and copper B. The polypeptide is Probable cytochrome c oxidase subunit 1-alpha (ctaD1) (Streptomyces avermitilis (strain ATCC 31267 / DSM 46492 / JCM 5070 / NBRC 14893 / NCIMB 12804 / NRRL 8165 / MA-4680)).